Here is a 519-residue protein sequence, read N- to C-terminus: Sugar transport protein MST5 (519 aa).

Residues 1–18 (MAGGAMVQTVGGKTYPGK) lie on the Cytoplasmic side of the membrane. The helical transmembrane segment at 19-39 (MTAFVFFTCLVASSGGLIFGY) threads the bilayer. Over 40 to 80 (DIGISGGVTSMDSFLSEFFPSVYAQAKASKDTNQYCKFDSQ) the chain is Extracellular. The helical transmembrane segment at 81 to 101 (LLTLFTSSLYLAALATSFVAA) threads the bilayer. The Cytoplasmic portion of the chain corresponds to 102-110 (WVTRVFGRK). A helical membrane pass occupies residues 111–127 (WSMFCGGVTFLAGSALN). Residue glycine 128 is a topological domain, extracellular. A helical membrane pass occupies residues 129 to 149 (AATDVMMLILGRILLGIGVGF). Residues 150 to 167 (ANQSVPLYLSEMAPANLR) are Cytoplasmic-facing. Residues 168–188 (GMLNIGFQLMTTIGILSANLI) traverse the membrane as a helical segment. Residues 189-202 (NYATSSIEGGWGWR) are Extracellular-facing. The chain crosses the membrane as a helical span at residues 203-223 (IGLGLAGVPALIITLGALVLP). The Cytoplasmic portion of the chain corresponds to 224 to 295 (DTPNSLIARG…IAILIPCFQQ (72 aa)). Residues 296–316 (LTGINVIMFYAPVLFLTIGFA) traverse the membrane as a helical segment. The Extracellular portion of the chain corresponds to 317–321 (GDASL). Residues 322-342 (MSAVITGLVNMFATVVSIISV) form a helical membrane-spanning segment. At 343–357 (DRLGRRVLFLQGGTQ) the chain is on the cytoplasmic side. A helical membrane pass occupies residues 358 to 378 (MFISQVVVGTLIALQFGVAGV). The Extracellular segment spans residues 379 to 386 (GEMSRSYA). A helical transmembrane segment spans residues 387–407 (ILLVLFICMYVAGFAWSWGPL). At 408–426 (GWLVPSEVFALEIRSAGQS) the chain is on the cytoplasmic side. The helical transmembrane segment at 427–447 (IAVCVNMMLTFVIGQAFLTML) threads the bilayer. Over 448–451 (CHLK) the chain is Extracellular. Residues 452–472 (FGLFYFFAGWMLVMTTFVALF) form a helical membrane-spanning segment. The Cytoplasmic segment spans residues 473–519 (LPETKGVPIEEMNHVWSRHWFWGSYVTAHDVAGAGAGGGGNRRSHNV).

It belongs to the major facilitator superfamily. Sugar transporter (TC 2.A.1.1) family. In terms of tissue distribution, expressed in panicles before heading. Expressed in flowers before pollination.

It localises to the membrane. Mediates active uptake of hexoses by sugar:proton symport. Can transport glucose, xylose and 3-O-methylglucose. May play a role at the early stage of seed development. The sequence is that of Sugar transport protein MST5 from Oryza sativa subsp. japonica (Rice).